We begin with the raw amino-acid sequence, 349 residues long: sn-glycerol-3-phosphate import ATP-binding protein UgpC (349 aa).

Positions 4–235 (VTLTAVRKVY…PASTFVASFM (232 aa)) constitute an ABC transporter domain. 37-44 (GPSGCGKS) contacts ATP.

This sequence belongs to the ABC transporter superfamily. sn-glycerol-3-phosphate importer (TC 3.A.1.1.3) family. The complex is composed of two ATP-binding proteins (UgpC), two transmembrane proteins (UgpA and UgpE) and a solute-binding protein (UgpB).

It is found in the cell inner membrane. The enzyme catalyses sn-glycerol 3-phosphate(out) + ATP + H2O = sn-glycerol 3-phosphate(in) + ADP + phosphate + H(+). Functionally, part of the ABC transporter complex UgpBAEC involved in sn-glycerol-3-phosphate (G3P) import. Responsible for energy coupling to the transport system. The protein is sn-glycerol-3-phosphate import ATP-binding protein UgpC of Jannaschia sp. (strain CCS1).